Consider the following 607-residue polypeptide: UvrABC system protein C (607 aa).

One can recognise a GIY-YIG domain in the interval 14–93 (HKPGVYLMLD…IKKHKPRYNI (80 aa)). The UVR domain occupies 203-238 (RDLLAELKRQMLQASERLNFEQAGQFRDQIRALKTT).

This sequence belongs to the UvrC family. Interacts with UvrB in an incision complex.

The protein localises to the cytoplasm. Its function is as follows. The UvrABC repair system catalyzes the recognition and processing of DNA lesions. UvrC both incises the 5' and 3' sides of the lesion. The N-terminal half is responsible for the 3' incision and the C-terminal half is responsible for the 5' incision. The chain is UvrABC system protein C from Desulfotalea psychrophila (strain LSv54 / DSM 12343).